The primary structure comprises 292 residues: Acetylglutamate kinase (292 aa).

Substrate-binding positions include 64–65 (GG), Arg86, and Asn190.

This sequence belongs to the acetylglutamate kinase family. ArgB subfamily.

The protein localises to the cytoplasm. The catalysed reaction is N-acetyl-L-glutamate + ATP = N-acetyl-L-glutamyl 5-phosphate + ADP. The protein operates within amino-acid biosynthesis; L-arginine biosynthesis; N(2)-acetyl-L-ornithine from L-glutamate: step 2/4. In terms of biological role, catalyzes the ATP-dependent phosphorylation of N-acetyl-L-glutamate. The protein is Acetylglutamate kinase of Pelobacter propionicus (strain DSM 2379 / NBRC 103807 / OttBd1).